The primary structure comprises 271 residues: Phosphatidylglycerol--prolipoprotein diacylglyceryl transferase (271 aa).

Transmembrane regions (helical) follow at residues 25–45 (WYGI…KFFV), 60–80 (YFIW…ILIY), 103–123 (FVGI…IATL), and 131–151 (ANPW…YVFG). R152 is a binding site for a 1,2-diacyl-sn-glycero-3-phospho-(1'-sn-glycerol). A run of 3 helical transmembrane segments spans residues 181-201 (PSQL…VYLA), 209-229 (GELI…CEFY), and 235-255 (GIGF…IMFI).

The protein belongs to the Lgt family.

The protein localises to the cell inner membrane. It catalyses the reaction L-cysteinyl-[prolipoprotein] + a 1,2-diacyl-sn-glycero-3-phospho-(1'-sn-glycerol) = an S-1,2-diacyl-sn-glyceryl-L-cysteinyl-[prolipoprotein] + sn-glycerol 1-phosphate + H(+). Its pathway is protein modification; lipoprotein biosynthesis (diacylglyceryl transfer). Functionally, catalyzes the transfer of the diacylglyceryl group from phosphatidylglycerol to the sulfhydryl group of the N-terminal cysteine of a prolipoprotein, the first step in the formation of mature lipoproteins. The chain is Phosphatidylglycerol--prolipoprotein diacylglyceryl transferase from Campylobacter jejuni (strain RM1221).